The following is a 258-amino-acid chain: Snake venom serine protease 2 (258 aa).

A signal peptide spans 1–18 (MVLIRVLANLLILQLSYA). Positions 19-24 (QKSSEL) are excised as a propeptide. The Peptidase S1 domain maps to 25–249 (VFGGRPCNIN…YNDWVQSIIA (225 aa)). 6 disulfides stabilise this stretch: Cys31–Cys163, Cys50–Cys66, Cys98–Cys256, Cys142–Cys210, Cys174–Cys189, and Cys200–Cys225. Asn44 carries N-linked (GlcNAc...) asparagine glycosylation. Active-site charge relay system residues include His65 and Asp110. 2 N-linked (GlcNAc...) asparagine glycosylation sites follow: Asn122 and Asn185. Ser204 functions as the Charge relay system in the catalytic mechanism.

Belongs to the peptidase S1 family. Snake venom subfamily. As to quaternary structure, monomer. As to expression, expressed by the venom gland.

It localises to the secreted. Its activity is regulated as follows. Inhibited by PMSF at 2 mM concentration but not by EDTA. In terms of biological role, snake venom serine protease that may act in the hemostasis system of the prey. Has weak fibrinogen clotting activity. Possesses amidolysis activity towards S-2251 (substrate for plasmin) but has no hydrolytic activity with S-2302 (plasma kallikrein substrate) or S-2238 (thrombin substrate). The sequence is that of Snake venom serine protease 2 from Protobothrops jerdonii (Jerdon's pitviper).